The following is a 342-amino-acid chain: MKILEFNDKRGSLKLHVENEDDLWLLHIIIKKGDRIVAKTTRDISMGKDSRRIPMTIELQVEYTEFQNFTTRLRIHGLILDAPERFGIKGAHHTVNLDIGDEVIIIKEQWSNYELEKIREQEEKKGKLLIALVDVDEYIIALLMKQGVKILAEKSLQTPGKDNDVVNENIEEMANEIISFVKLTGVNVIIIAGPGPFKDMVNQKIKQIDNKLIVYVDSVSSASRAGLNELLRRDIIDQVYREFEIAQQLKILESIMENLAKNTGLVVYGIEDIKKANELGAVDKLLITEDYLTDTGREIIDELLRDIEKKKGKIMIVPKDSPIYYQVKNLTGIVSLLRFRIN.

Belongs to the eukaryotic release factor 1 family. Pelota subfamily. As to quaternary structure, monomer. A divalent metal cation is required as a cofactor.

The protein localises to the cytoplasm. Functionally, may function in recognizing stalled ribosomes, interact with stem-loop structures in stalled mRNA molecules, and effect endonucleolytic cleavage of the mRNA. May play a role in the release non-functional ribosomes and degradation of damaged mRNAs. Has endoribonuclease activity. In Sulfolobus acidocaldarius (strain ATCC 33909 / DSM 639 / JCM 8929 / NBRC 15157 / NCIMB 11770), this protein is Protein pelota homolog.